Consider the following 114-residue polypeptide: Transcription factor S1 (114 aa).

The segment at 1–43 (MIVVKFCPKCNSMMVPKKSNGKNVYRCTKCGYEKEVPETTIVV) is N-ZR. Residues Cys7, Cys10, Cys27, Cys30, Cys75, and Cys78 each contribute to the Zn(2+) site. Residues 63-114 (MPSGAQKIKGVLCPSCKNDEAYFWILQTRRADEPPTRFYKCTKCGKVWREYE) are C-ZR. The TFIIS-type zinc-finger motif lies at 71 to 111 (KGVLCPSCKNDEAYFWILQTRRADEPPTRFYKCTKCGKVWR). Catalysis depends on residues Asp94 and Glu95. Zn(2+) is bound by residues Cys103 and Cys106.

Belongs to the archaeal RpoM/eukaryotic RPA12/RPB9/RPC11 RNA polymerase family. Interacts with RNA polymerase; probably competes with TFS4 for the same binding site. Zn(2+) serves as cofactor.

Its function is as follows. Induces RNA cleavage activity in the RNA polymerase. Induces rapid cleavage of a stalled transcription elongation complex with a 2-nucleotide reduction at the 3' end of the nascent RNA. Truncated RNA is able to resume elongation. During transcription elongation it enhances processivity. Involved in transcriptional proofreading and fidelity. Misincorporation of nucleotides during elongation of transcription leads to arrested elongation complexes which are rescued by TFS-promoted removal of a dinucleotide from the 3'-end. TFS1 is able to induce a cleavage resynthesis cycle in stalled elongation complexes (resulting from the next missing nucleotide or a reduced incorporation rate of a wrong nucleotide) preventing misincorporation and enabling proofreading in a post-incorporation manner. Pausing of elongation complexes is the main determinant of TFS-induced RNA cleavage. In Saccharolobus solfataricus (strain ATCC 35092 / DSM 1617 / JCM 11322 / P2) (Sulfolobus solfataricus), this protein is Transcription factor S1.